The following is a 420-amino-acid chain: ATP phosphoribosyltransferase regulatory subunit (420 aa).

It belongs to the class-II aminoacyl-tRNA synthetase family. HisZ subfamily. In terms of assembly, heteromultimer composed of HisG and HisZ subunits.

The protein localises to the cytoplasm. It participates in amino-acid biosynthesis; L-histidine biosynthesis; L-histidine from 5-phospho-alpha-D-ribose 1-diphosphate: step 1/9. In terms of biological role, required for the first step of histidine biosynthesis. May allow the feedback regulation of ATP phosphoribosyltransferase activity by histidine. In Bacillus anthracis (strain A0248), this protein is ATP phosphoribosyltransferase regulatory subunit.